The primary structure comprises 551 residues: Scaffold protein OPG125 (551 aa).

It belongs to the orthopoxvirus protein OPG125 family. Homotrimer. Self-assembles to form a layer. Interacts with OPG158 (via N-terminus); this interaction is necessary for OPG125 association with membranes.

It is found in the membrane. In terms of biological role, scaffold protein which forms a transitory spherical honeycomb lattice providing curvature and rigidity to the convex membrane of crescent and immature virions (IV). This association occurs concomitantly with viral membrane formation. Targeted by the drug rifampicin, which prevents the formation of this lattice, and hence virus morphogenesis. In the presence of rifampicin, irregularly shaped membranes that lack the honeycomb layer accumulate around areas of electron-dense viroplasm. This layer is lost from virions during maturation from IV to mature virion (MV), through the proteolysis of OPG158 N-terminus. This Homo sapiens (Human) protein is Scaffold protein OPG125 (OPG125).